The following is a 91-amino-acid chain: Protein RacC (91 aa).

This chain is Protein RacC (racC), found in Escherichia coli (strain K12).